The primary structure comprises 476 residues: Cysteine--tRNA ligase (476 aa).

Residue C31 coordinates Zn(2+). Positions 33 to 43 match the 'HIGH' region motif; sequence PTVYNYAHIGN. Zn(2+) is bound by residues C211, H236, and E240. Positions 269-273 match the 'KMSKS' region motif; the sequence is KMSKS. Residue K272 participates in ATP binding.

It belongs to the class-I aminoacyl-tRNA synthetase family. In terms of assembly, monomer. Zn(2+) is required as a cofactor.

Its subcellular location is the cytoplasm. The catalysed reaction is tRNA(Cys) + L-cysteine + ATP = L-cysteinyl-tRNA(Cys) + AMP + diphosphate. This is Cysteine--tRNA ligase from Xanthomonas axonopodis pv. citri (strain 306).